Reading from the N-terminus, the 275-residue chain is Formamidopyrimidine-DNA glycosylase (275 aa).

The Schiff-base intermediate with DNA role is filled by P2. Residue E3 is the Proton donor of the active site. The active-site Proton donor; for beta-elimination activity is K59. DNA-binding residues include H94 and R113. The FPG-type zinc-finger motif lies at L241 to N275. R265 (proton donor; for delta-elimination activity) is an active-site residue.

This sequence belongs to the FPG family. Monomer. The cofactor is Zn(2+).

The catalysed reaction is Hydrolysis of DNA containing ring-opened 7-methylguanine residues, releasing 2,6-diamino-4-hydroxy-5-(N-methyl)formamidopyrimidine.. It carries out the reaction 2'-deoxyribonucleotide-(2'-deoxyribose 5'-phosphate)-2'-deoxyribonucleotide-DNA = a 3'-end 2'-deoxyribonucleotide-(2,3-dehydro-2,3-deoxyribose 5'-phosphate)-DNA + a 5'-end 5'-phospho-2'-deoxyribonucleoside-DNA + H(+). Functionally, involved in base excision repair of DNA damaged by oxidation or by mutagenic agents. Acts as a DNA glycosylase that recognizes and removes damaged bases. Has a preference for oxidized purines, such as 7,8-dihydro-8-oxoguanine (8-oxoG). Has AP (apurinic/apyrimidinic) lyase activity and introduces nicks in the DNA strand. Cleaves the DNA backbone by beta-delta elimination to generate a single-strand break at the site of the removed base with both 3'- and 5'-phosphates. In Ureaplasma parvum serovar 3 (strain ATCC 700970), this protein is Formamidopyrimidine-DNA glycosylase.